The sequence spans 490 residues: Hippocampus abundant transcript 1 protein (490 aa).

M1 carries the post-translational modification N-acetylmethionine. Residues 1 to 40 (MTQGKKKKRAANRSIMLAKKIIIKDGGTPQGIGSPSVYHA) lie on the Extracellular side of the membrane. N12 carries N-linked (GlcNAc...) asparagine glycosylation. Residues 41–61 (VIVIFLEFFAWGLLTAPTLVV) traverse the membrane as a helical segment. Topologically, residues 62–74 (LHETFPKHTFLMN) are cytoplasmic. The chain crosses the membrane as a helical span at residues 75–95 (GLIQGVKGLLSFLSAPLIGAL). Topologically, residues 96-103 (SDVWGRKS) are extracellular. A helical transmembrane segment spans residues 104 to 124 (FLLLTVFFTCAPIPLMKISPW). Over 125 to 126 (WY) the chain is Cytoplasmic. Residues 127–147 (FAVISVSGVFAVTFSVVFAYV) traverse the membrane as a helical segment. At 148 to 160 (ADITQEHERSMAY) the chain is on the extracellular side. Residues 161–181 (GLVSATFAASLVTSPAIGAYL) form a helical membrane-spanning segment. Topologically, residues 182–188 (GRVYGDS) are cytoplasmic. Residues 189–209 (LVVVLATAIALLDICFILVAV) form a helical membrane-spanning segment. The Extracellular portion of the chain corresponds to 210–243 (PESLPEKMRPASWGAPISWEQADPFASLKKVGQD). A helical transmembrane segment spans residues 244 to 264 (SIVLLICITVFLSYLPEAGQY). At 265–284 (SSFFLYLRQIMKFSPESVAA) the chain is on the cytoplasmic side. Residues 285 to 305 (FIAVLGILSIIAQTIVLSLLM) form a helical membrane-spanning segment. The Extracellular portion of the chain corresponds to 306 to 313 (RSIGNKNT). A helical membrane pass occupies residues 314-334 (ILLGLGFQILQLAWYGFGSEP). Over 335–337 (WMM) the chain is Cytoplasmic. Residues 338 to 358 (WAAGAVAAMSSITFPAVSALV) traverse the membrane as a helical segment. The Extracellular portion of the chain corresponds to 359-379 (SRTADADQQGVVQGMITGIRG). A helical transmembrane segment spans residues 380–400 (LCNGLGPALYGFIFYIFHVEL). The Cytoplasmic segment spans residues 401–427 (KELPITGTDLGTNTSPQHHFEQNSIIP). A helical transmembrane segment spans residues 428-448 (GPPFLFGACSVLLALLVALFI). At 449–490 (PEHTNLSLRSSSWRKHCGSHSHPHNTQAPGEAKEPLLQDTNV) the chain is on the extracellular side. A glycan (N-linked (GlcNAc...) asparagine) is linked at N453. The segment at 465-490 (CGSHSHPHNTQAPGEAKEPLLQDTNV) is disordered.

Belongs to the major facilitator superfamily.

It is found in the membrane. The chain is Hippocampus abundant transcript 1 protein from Homo sapiens (Human).